The chain runs to 86 residues: Translation initiation factor IF-1 3 (86 aa).

Positions 1-72 (MAKEELIEMQ…NKGRVTFRHI (72 aa)) constitute an S1-like domain.

This sequence belongs to the IF-1 family. As to quaternary structure, component of the 30S ribosomal translation pre-initiation complex which assembles on the 30S ribosome in the order IF-2 and IF-3, IF-1 and N-formylmethionyl-tRNA(fMet); mRNA recruitment can occur at any time during PIC assembly.

It is found in the cytoplasm. Its function is as follows. One of the essential components for the initiation of protein synthesis. Stabilizes the binding of IF-2 and IF-3 on the 30S subunit to which N-formylmethionyl-tRNA(fMet) subsequently binds. Helps modulate mRNA selection, yielding the 30S pre-initiation complex (PIC). Upon addition of the 50S ribosomal subunit IF-1, IF-2 and IF-3 are released leaving the mature 70S translation initiation complex. This chain is Translation initiation factor IF-1 3, found in Acidovorax sp. (strain JS42).